The chain runs to 430 residues: Anaerobic glycerol-3-phosphate dehydrogenase subunit B (430 aa).

Belongs to the anaerobic G-3-P dehydrogenase subunit B family. Composed of a catalytic GlpA/B dimer and of membrane bound GlpC. FMN is required as a cofactor.

The enzyme catalyses a quinone + sn-glycerol 3-phosphate = dihydroxyacetone phosphate + a quinol. It functions in the pathway polyol metabolism; glycerol degradation via glycerol kinase pathway; glycerone phosphate from sn-glycerol 3-phosphate (anaerobic route): step 1/1. In terms of biological role, conversion of glycerol 3-phosphate to dihydroxyacetone. Uses fumarate or nitrate as electron acceptor. The chain is Anaerobic glycerol-3-phosphate dehydrogenase subunit B from Actinobacillus succinogenes (strain ATCC 55618 / DSM 22257 / CCUG 43843 / 130Z).